Consider the following 390-residue polypeptide: Imidazolonepropionase (390 aa).

The Fe(3+) site is built by His71 and His73. Zn(2+)-binding residues include His71 and His73. The 4-imidazolone-5-propanoate site is built by Arg80, Tyr138, and His165. Tyr138 is an N-formimidoyl-L-glutamate binding site. His228 lines the Fe(3+) pocket. Residue His228 coordinates Zn(2+). Gln231 contacts 4-imidazolone-5-propanoate. A Fe(3+)-binding site is contributed by Asp302. Asp302 contacts Zn(2+). N-formimidoyl-L-glutamate-binding residues include Asn304 and Gly306. Ser307 contributes to the 4-imidazolone-5-propanoate binding site.

It belongs to the metallo-dependent hydrolases superfamily. HutI family. Requires Zn(2+) as cofactor. Fe(3+) is required as a cofactor.

The protein resides in the cytoplasm. It carries out the reaction 4-imidazolone-5-propanoate + H2O = N-formimidoyl-L-glutamate. It functions in the pathway amino-acid degradation; L-histidine degradation into L-glutamate; N-formimidoyl-L-glutamate from L-histidine: step 3/3. Its function is as follows. Catalyzes the hydrolytic cleavage of the carbon-nitrogen bond in imidazolone-5-propanoate to yield N-formimidoyl-L-glutamate. It is the third step in the universal histidine degradation pathway. The sequence is that of Imidazolonepropionase from Streptomyces griseus subsp. griseus (strain JCM 4626 / CBS 651.72 / NBRC 13350 / KCC S-0626 / ISP 5235).